The chain runs to 232 residues: Octanoyltransferase (232 aa).

The BPL/LPL catalytic domain maps to 40–226; the sequence is GSAPERVWLL…TWQDLFGSVP (187 aa). Substrate is bound by residues 79 to 86, 157 to 159, and 170 to 172; these read RGGQWTYH, ALG, and GVA. The active-site Acyl-thioester intermediate is the Cys-188.

The protein belongs to the LipB family.

It is found in the cytoplasm. It catalyses the reaction octanoyl-[ACP] + L-lysyl-[protein] = N(6)-octanoyl-L-lysyl-[protein] + holo-[ACP] + H(+). It participates in protein modification; protein lipoylation via endogenous pathway; protein N(6)-(lipoyl)lysine from octanoyl-[acyl-carrier-protein]: step 1/2. Its function is as follows. Catalyzes the transfer of endogenously produced octanoic acid from octanoyl-acyl-carrier-protein onto the lipoyl domains of lipoate-dependent enzymes. Lipoyl-ACP can also act as a substrate although octanoyl-ACP is likely to be the physiological substrate. This is Octanoyltransferase from Gluconacetobacter diazotrophicus (strain ATCC 49037 / DSM 5601 / CCUG 37298 / CIP 103539 / LMG 7603 / PAl5).